The sequence spans 102 residues: uncharacterized protein (102 aa).

The region spanning 48–102 (LNDKRKSLGIELSMLELQTGVSISTLNRLFQDPSQVRFTTVFLVAQTLGVSLCAI) is the HTH cro/C1-type domain. Positions 59-78 (LSMLELQTGVSISTLNRLFQ) form a DNA-binding region, H-T-H motif.

This is an uncharacterized protein from Haemophilus influenzae (strain ATCC 51907 / DSM 11121 / KW20 / Rd).